The primary structure comprises 432 residues: Phosphomethylpyrimidine synthase (432 aa).

Substrate-binding positions include Asn-66, Met-95, Tyr-124, His-163, 185–187 (SRG), 226–229 (DGLR), and Glu-265. His-269 lines the Zn(2+) pocket. Substrate is bound at residue Tyr-292. His-333 contacts Zn(2+). Positions 409, 412, and 416 each coordinate [4Fe-4S] cluster.

Belongs to the ThiC family. Requires [4Fe-4S] cluster as cofactor.

It catalyses the reaction 5-amino-1-(5-phospho-beta-D-ribosyl)imidazole + S-adenosyl-L-methionine = 4-amino-2-methyl-5-(phosphooxymethyl)pyrimidine + CO + 5'-deoxyadenosine + formate + L-methionine + 3 H(+). It participates in cofactor biosynthesis; thiamine diphosphate biosynthesis. Its function is as follows. Catalyzes the synthesis of the hydroxymethylpyrimidine phosphate (HMP-P) moiety of thiamine from aminoimidazole ribotide (AIR) in a radical S-adenosyl-L-methionine (SAM)-dependent reaction. The sequence is that of Phosphomethylpyrimidine synthase from Moorella thermoacetica (strain ATCC 39073 / JCM 9320).